Consider the following 218-residue polypeptide: Hypoxanthine-guanine phosphoribosyltransferase (218 aa).

At alanine 2 the chain carries N-acetylalanine. Residue lysine 69 coordinates GMP. Lysine 103 carries the post-translational modification N6-acetyllysine. Lysine 115 participates in a covalent cross-link: Glycyl lysine isopeptide (Lys-Gly) (interchain with G-Cter in SUMO1); alternate. A Glycyl lysine isopeptide (Lys-Gly) (interchain with G-Cter in SUMO2); alternate cross-link involves residue lysine 115. GMP-binding positions include 134–142 (EDIIDTGKT), lysine 166, 186–188 (KFV), and aspartate 194. The active-site Proton acceptor is aspartate 138. At threonine 142 the chain carries Phosphothreonine. Aspartate 194 lines the Mg(2+) pocket.

Belongs to the purine/pyrimidine phosphoribosyltransferase family. In terms of assembly, homotetramer. Mg(2+) is required as a cofactor.

It localises to the cytoplasm. The enzyme catalyses IMP + diphosphate = hypoxanthine + 5-phospho-alpha-D-ribose 1-diphosphate. It carries out the reaction GMP + diphosphate = guanine + 5-phospho-alpha-D-ribose 1-diphosphate. It participates in purine metabolism; IMP biosynthesis via salvage pathway; IMP from hypoxanthine: step 1/1. Its function is as follows. Converts guanine to guanosine monophosphate, and hypoxanthine to inosine monophosphate. Transfers the 5-phosphoribosyl group from 5-phosphoribosylpyrophosphate onto the purine. Plays a central role in the generation of purine nucleotides through the purine salvage pathway. In Cricetulus griseus (Chinese hamster), this protein is Hypoxanthine-guanine phosphoribosyltransferase (HPRT1).